The chain runs to 412 residues: Multifunctional CCA protein (412 aa).

The ATP site is built by Gly-8 and Arg-11. CTP contacts are provided by Gly-8 and Arg-11. 2 residues coordinate Mg(2+): Asp-21 and Asp-23. ATP-binding residues include Arg-91, Arg-138, and Arg-141. The CTP site is built by Arg-91, Arg-138, and Arg-141. Positions 229 to 334 (RGQHTLLALQ…LELFNQLDVW (106 aa)) constitute an HD domain.

It belongs to the tRNA nucleotidyltransferase/poly(A) polymerase family. Bacterial CCA-adding enzyme type 1 subfamily. Monomer. Can also form homodimers and oligomers. Mg(2+) serves as cofactor. Requires Ni(2+) as cofactor.

The enzyme catalyses a tRNA precursor + 2 CTP + ATP = a tRNA with a 3' CCA end + 3 diphosphate. It carries out the reaction a tRNA with a 3' CCA end + 2 CTP + ATP = a tRNA with a 3' CCACCA end + 3 diphosphate. In terms of biological role, catalyzes the addition and repair of the essential 3'-terminal CCA sequence in tRNAs without using a nucleic acid template. Adds these three nucleotides in the order of C, C, and A to the tRNA nucleotide-73, using CTP and ATP as substrates and producing inorganic pyrophosphate. tRNA 3'-terminal CCA addition is required both for tRNA processing and repair. Also involved in tRNA surveillance by mediating tandem CCA addition to generate a CCACCA at the 3' terminus of unstable tRNAs. While stable tRNAs receive only 3'-terminal CCA, unstable tRNAs are marked with CCACCA and rapidly degraded. The sequence is that of Multifunctional CCA protein from Haemophilus ducreyi (strain 35000HP / ATCC 700724).